Reading from the N-terminus, the 689-residue chain is Sodium-dependent phosphate transport protein 2B (689 aa).

Residues M1 to E41 form a disordered region. The Cytoplasmic portion of the chain corresponds to M1–L100. Residues I101–F121 form a helical membrane-spanning segment. At Q122–N135 the chain is on the extracellular side. A helical transmembrane segment spans residues S136 to V156. Over Q157–A212 the chain is Cytoplasmic. The helical transmembrane segment at F213 to V233 threads the bilayer. Over E234–A362 the chain is Extracellular. N-linked (GlcNAc...) asparagine glycans are attached at residues N294, N307, and N320. A disulfide bond links C302 and C349. A helical transmembrane segment spans residues V363–V383. Residues K384–P407 lie on the Cytoplasmic side of the membrane. A helical membrane pass occupies residues F408–I428. Over V429–Q485 the chain is Extracellular. Residues I486–F506 form a helical membrane-spanning segment. Residues T507–R525 are Cytoplasmic-facing. The helical transmembrane segment at W526 to L546 threads the bilayer. The Extracellular portion of the chain corresponds to S547 to R552. Residues V553–L573 form a helical membrane-spanning segment. The Cytoplasmic portion of the chain corresponds to L574–T687.

Belongs to the SLC34A transporter family.

The protein resides in the apical cell membrane. It carries out the reaction 3 Na(+)(out) + phosphate(out) = 3 Na(+)(in) + phosphate(in). Its function is as follows. Involved in actively transporting phosphate into cells via Na(+) cotransport. In Pongo abelii (Sumatran orangutan), this protein is Sodium-dependent phosphate transport protein 2B (SLC34A2).